Consider the following 935-residue polypeptide: Isoleucine--tRNA ligase (935 aa).

The 'HIGH' region motif lies at 58-68 (PYANGNLHLGH). Residue Glu559 participates in L-isoleucyl-5'-AMP binding. Residues 600–604 (KMSKS) carry the 'KMSKS' region motif. ATP is bound at residue Lys603. Cys898, Cys901, Cys918, and Cys921 together coordinate Zn(2+).

This sequence belongs to the class-I aminoacyl-tRNA synthetase family. IleS type 1 subfamily. Monomer. The cofactor is Zn(2+).

Its subcellular location is the cytoplasm. The enzyme catalyses tRNA(Ile) + L-isoleucine + ATP = L-isoleucyl-tRNA(Ile) + AMP + diphosphate. In terms of biological role, catalyzes the attachment of isoleucine to tRNA(Ile). As IleRS can inadvertently accommodate and process structurally similar amino acids such as valine, to avoid such errors it has two additional distinct tRNA(Ile)-dependent editing activities. One activity is designated as 'pretransfer' editing and involves the hydrolysis of activated Val-AMP. The other activity is designated 'posttransfer' editing and involves deacylation of mischarged Val-tRNA(Ile). The sequence is that of Isoleucine--tRNA ligase from Haemophilus ducreyi (strain 35000HP / ATCC 700724).